The chain runs to 300 residues: Protein FANTASTIC FOUR 4 (300 aa).

Residues 30 to 56 (PQLSTPLKSHFQNSSIAPQDNPITINA) are compositionally biased toward polar residues. Disordered stretches follow at residues 30–104 (PQLS…SPSS), 142–170 (TMET…LPPP), and 227–264 (TETK…KEEE). 2 stretches are compositionally biased toward low complexity: residues 58–88 (SLPS…NSSS) and 142–151 (TMETRTTSTT). The FAF domain occupies 166 to 217 (SLPPPLTSMIGFDCIEVKSHRENGRLVMMATRPPPRNRCLQDRSNGCVRLAI). Acidic residues predominate over residues 233–262 (KEEEEEETIETVRDNEEEIPEYKEEEEEKE).

It belongs to the fantastic four family. As to expression, expressed in the shoot apex and young siliques. Detected in provascular and vascular tissue, but not in the vegetative meristem. In inflorescences, restricted to the base of the flower and to the vasculature of the stem and the pedicels, but absent from young flowers. Detected in the center of the inflorescence meristem.

Its function is as follows. Regulates the size of the shoot meristem by modulating the CLV3-WUS feedback loop. Can repress WUS but is under negative control by CLV3. This chain is Protein FANTASTIC FOUR 4 (FAF4), found in Arabidopsis thaliana (Mouse-ear cress).